A 1143-amino-acid chain; its full sequence is Disease resistance protein Pikm1-TS (1143 aa).

The structured coiled coil (CC) domain stretch occupies residues 1–190 (MEAAAMAVTA…PLRIMGGEMQ (190 aa)). In terms of domain architecture, HMA spans 189-258 (MQKIVFKIPM…KVGPAMFLEV (70 aa)). The interval 191-264 (KIVFKIPMVD…FLEVSQVKED (74 aa)) is HMA-like domain. One can recognise an NB-ARC domain in the interval 282–570 (HEVKTICILG…WIAEGFVSEE (289 aa)). LRR repeat units follow at residues 681–706 (FKRL…ICEQ), 708–731 (SLRV…MRKL), 732–754 (KHLE…IGEL), 756–777 (HLRI…IREL), 778–800 (QHLH…VGKL), 802–823 (NLKI…IGEL), 824–848 (NHLQ…QISQ), 945–968 (MPNL…INGT), 979–1002 (DSRV…EFKF), and 1004–1027 (AGPA…VFRC).

Belongs to the disease resistance NB-LRR family. Interacts with AVR-Pik through its N-terminal part containing the HMA-like domain. As to expression, constitutively expressed.

Disease resistance (R) protein that specifically recognizes the AVR-Pik effector avirulence protein from M.oryzae. Resistance proteins guard the plant against pathogens that contain an appropriate avirulence protein via an indirect interaction with this avirulence protein. That triggers a defense system including the hypersensitive response, which restricts the pathogen growth. Contribution of Pikm-2 is required to recognize the effector avirulence protein AVR-Pik. In Oryza sativa subsp. japonica (Rice), this protein is Disease resistance protein Pikm1-TS.